Here is a 396-residue protein sequence, read N- to C-terminus: S-adenosylmethionine synthase (396 aa).

H16 is an ATP binding site. Residue D18 participates in Mg(2+) binding. A K(+)-binding site is contributed by E44. L-methionine is bound by residues E57 and Q100. Positions 100–110 (QSKDIALGVDK) are flexible loop. Residues 176–178 (DGK), 243–244 (RF), D252, 258–259 (RK), A275, and K279 contribute to the ATP site. D252 serves as a coordination point for L-methionine. K283 contributes to the L-methionine binding site.

This sequence belongs to the AdoMet synthase family. In terms of assembly, homotetramer; dimer of dimers. Mg(2+) is required as a cofactor. Requires K(+) as cofactor.

It localises to the cytoplasm. It carries out the reaction L-methionine + ATP + H2O = S-adenosyl-L-methionine + phosphate + diphosphate. It participates in amino-acid biosynthesis; S-adenosyl-L-methionine biosynthesis; S-adenosyl-L-methionine from L-methionine: step 1/1. Functionally, catalyzes the formation of S-adenosylmethionine (AdoMet) from methionine and ATP. The overall synthetic reaction is composed of two sequential steps, AdoMet formation and the subsequent tripolyphosphate hydrolysis which occurs prior to release of AdoMet from the enzyme. This chain is S-adenosylmethionine synthase, found in Lachnoclostridium phytofermentans (strain ATCC 700394 / DSM 18823 / ISDg) (Clostridium phytofermentans).